Consider the following 706-residue polypeptide: Septin ring organizing protein mid2 (706 aa).

Disordered stretches follow at residues 62 to 102 (STAP…PFST) and 145 to 180 (DEAS…KKNP). Polar residues-rich tracts occupy residues 81–90 (YDQTLSNSSS) and 149–169 (NKSS…SNQG). Ser379 carries the post-translational modification Phosphoserine. A PH domain is found at 583–688 (TLLCDGYLCQ…WMSTLRQHLG (106 aa)).

It belongs to the BUD4 family.

Its subcellular location is the cytoplasm. The protein localises to the cell cortex. It is found in the cytoskeleton. Its function is as follows. Responsible for the proper stability and function of septins during cytokinesis. Required for the correct formation of the medial septin ring structure in mitosis and for the proper localization of endo-glucanases agn1 and eng1, which are needed for efficient cell separation. May act as a landmark for the localization of hydrolytic proteins to the medial region. In Schizosaccharomyces pombe (strain 972 / ATCC 24843) (Fission yeast), this protein is Septin ring organizing protein mid2 (mid2).